We begin with the raw amino-acid sequence, 204 residues long: Large ribosomal subunit protein eL15 (204 aa).

A disordered region spans residues 155 to 204 (VHKHREQRGLTSAGRKSRGLGKGWRFSATRGGSQAKNWKRKNTKVFHRKR). Basic residues predominate over residues 191-204 (NWKRKNTKVFHRKR).

The protein belongs to the eukaryotic ribosomal protein eL15 family.

The chain is Large ribosomal subunit protein eL15 (rpl-15) from Caenorhabditis elegans.